A 560-amino-acid chain; its full sequence is Zinc finger protein 619 (560 aa).

C2H2-type zinc fingers lie at residues 188–210 (YKCGECGSYYNPHSDFHLHQRVH), 216–238 (YTCKECGKTFRYNSKLSRHQKIH), 244–266 (YSCEECGQAFSQNSHLLQHQKLH), 272–294 (YECTDCGKTFSYNSKLIRHQRIH), 300–322 (FKCKECGKAFSCSYDCIIHERIH), 328–350 (YECKECGKSLSSNSVLIQHQRIH), 356–378 (YECKECGKAFHRSSVFLQHQRFH), 384–406 (YKCNECWKTFSCSSRFIVHQRIH), 412–434 (YECQECGKTFSQKITLVQHQRVH), and 440–462 (YECKECGKAFRWNASFIQHQKWH).

It belongs to the krueppel C2H2-type zinc-finger protein family.

The protein resides in the nucleus. May be involved in transcriptional regulation. This Homo sapiens (Human) protein is Zinc finger protein 619 (ZNF619).